A 274-amino-acid chain; its full sequence is Basic leucine zipper transcriptional factor ATF-like 2 (274 aa).

Disordered stretches follow at residues 1-47 (MHLC…ALHQ), 128-151 (GSCY…LLQC), and 187-229 (GSSS…PSSA). The 64-residue stretch at 17–80 (EQQRQLKKQK…AWWSRTLHVH (64 aa)) folds into the bZIP domain. Residues 20 to 41 (RQLKKQKNRAAAQRSRQKHTDK) form a basic motif region. Basic and acidic residues predominate over residues 37–47 (KHTDKADALHQ). Residues 45–66 (LHQQHESLEKDNLALRKEIQSL) are leucine-zipper. The segment covering 187–196 (GSSSKLSALQ) has biased composition (low complexity).

Belongs to the bZIP family. As to quaternary structure, heterodimer; heterodimerizes with JUN family proteins.

The protein resides in the nucleus. In terms of biological role, AP-1 family transcription factor that controls the differentiation of lineage-specific cells in the immune system. Following infection, participates in the differentiation of CD8(+) thymic conventional dendritic cells in the immune system. Acts via the formation of a heterodimer with JUN family proteins that recognizes and binds DNA sequence 5'-TGA[CG]TCA-3' and regulates expression of target genes. Selectively suppresses CCN1 transcription and hence blocks the downstream cell proliferation signals produced by CCN1 and inhibits CCN1-induced anchorage-independent growth and invasion in several cancer types, such as breast cancer, malignant glioma and metastatic melanoma. Possibly acts by interfering with AP-1 binding to CCN1 promoter. The chain is Basic leucine zipper transcriptional factor ATF-like 2 (BATF2) from Homo sapiens (Human).